Consider the following 317-residue polypeptide: Pseudouridine-5'-phosphate glycosidase 1 (317 aa).

E40 acts as the Proton donor in catalysis. Residues K101 and V121 each contribute to the substrate site. Position 153 (D153) interacts with Mn(2+). 155–157 (SAD) lines the substrate pocket. K174 serves as the catalytic Nucleophile.

The protein belongs to the pseudouridine-5'-phosphate glycosidase family. As to quaternary structure, homotrimer. Mn(2+) serves as cofactor.

The catalysed reaction is D-ribose 5-phosphate + uracil = psi-UMP + H2O. In terms of biological role, catalyzes the reversible cleavage of pseudouridine 5'-phosphate (PsiMP) to ribose 5-phosphate and uracil. Functions biologically in the cleavage direction, as part of a pseudouridine degradation pathway. The protein is Pseudouridine-5'-phosphate glycosidase 1 of Rhizobium johnstonii (strain DSM 114642 / LMG 32736 / 3841) (Rhizobium leguminosarum bv. viciae).